Here is a 247-residue protein sequence, read N- to C-terminus: Type III pantothenate kinase (247 aa).

6–13 (DVGNTHTT) serves as a coordination point for ATP. 101-104 (GADR) contacts substrate. The active-site Proton acceptor is the D103. D123 contributes to the K(+) binding site. ATP is bound at residue T126. Residue T177 coordinates substrate.

The protein belongs to the type III pantothenate kinase family. As to quaternary structure, homodimer. NH4(+) is required as a cofactor. It depends on K(+) as a cofactor.

Its subcellular location is the cytoplasm. It catalyses the reaction (R)-pantothenate + ATP = (R)-4'-phosphopantothenate + ADP + H(+). The protein operates within cofactor biosynthesis; coenzyme A biosynthesis; CoA from (R)-pantothenate: step 1/5. In terms of biological role, catalyzes the phosphorylation of pantothenate (Pan), the first step in CoA biosynthesis. This is Type III pantothenate kinase from Thermosipho melanesiensis (strain DSM 12029 / CIP 104789 / BI429).